The primary structure comprises 240 residues: Ion-translocating oxidoreductase complex subunit E (240 aa).

5 helical membrane-spanning segments follow: residues 41-61 (LGLG…VSLV), 71-91 (LPAF…LMQA), 95-115 (ELYQ…VILG), 130-150 (SFDG…LGGL), and 184-204 (GFLL…LIAL).

The protein belongs to the NqrDE/RnfAE family. As to quaternary structure, the complex is composed of six subunits: RnfA, RnfB, RnfC, RnfD, RnfE and RnfG.

The protein resides in the cell inner membrane. Functionally, part of a membrane-bound complex that couples electron transfer with translocation of ions across the membrane. This Pseudomonas aeruginosa (strain ATCC 15692 / DSM 22644 / CIP 104116 / JCM 14847 / LMG 12228 / 1C / PRS 101 / PAO1) protein is Ion-translocating oxidoreductase complex subunit E.